Consider the following 109-residue polypeptide: Cell division protein ZapA (109 aa).

Residues 21 to 99 (PEQRDALNQA…IEQALLEQGR (79 aa)) adopt a coiled-coil conformation.

The protein belongs to the ZapA family. Type 1 subfamily. In terms of assembly, homodimer. Interacts with FtsZ.

It is found in the cytoplasm. Its function is as follows. Activator of cell division through the inhibition of FtsZ GTPase activity, therefore promoting FtsZ assembly into bundles of protofilaments necessary for the formation of the division Z ring. It is recruited early at mid-cell but it is not essential for cell division. The polypeptide is Cell division protein ZapA (Klebsiella pneumoniae (strain 342)).